Consider the following 572-residue polypeptide: MNLHQTVEREAAAAFAAAGIADSPVVLQPTKNAEHGDFQINGVMGAAKKAKQNPRELAQKVAEALADNAVIESAEVAGPGFINLRLRPEFLAQNIQTALNDARFGIAKTDKPQTVVIDYSSPNLAKEMHVGHLRSSIIGDSISRVLAFMGNTVVRQNHVGDWGTQFGMLVAYLVEQQKDNAAFELADLEQFYRAAKVRFDEDPAFADTAREYVVKLQGGDETVLALWKQFVDISLSHAQAVYDTLGLKLRPEDVAGESKYNDDLQPVVDDLVQKGLAVEDDGAKVVFLDEFKNKEGEPAAFIVQKQGGGFLYASTDLACLRYRVGTLHADRLLYVVDHRQALHFEQLFTTSRKAGYLPENVGAAFVGFGTMMGKDGKPFKTRSGDTVKLVDLLTEAVERAAALVKEKNPELGADEAAKIGKTVGIGAVKYADLSKNRTSNYVFDWDAMLSFEGNTAPYLQYAYTRVQSVFRKAGEWDATAPTVLSEPLEKQLAAELLKFEDVLQSVADTAYPHYLAAYLYQIATLFSRFYEACPILKAESASRNSRLQLAKLTGDTLKQGLDLLGIDVLDVM.

Positions 122–132 (PNLAKEMHVGH) match the 'HIGH' region motif.

The protein belongs to the class-I aminoacyl-tRNA synthetase family. In terms of assembly, monomer.

It is found in the cytoplasm. It carries out the reaction tRNA(Arg) + L-arginine + ATP = L-arginyl-tRNA(Arg) + AMP + diphosphate. The protein is Arginine--tRNA ligase of Neisseria meningitidis serogroup A / serotype 4A (strain DSM 15465 / Z2491).